A 501-amino-acid chain; its full sequence is 5-beta-cholestane-3-alpha,7-alpha-diol 12-alpha-hydroxylase (501 aa).

Residues 1 to 21 (MVLWGPVLGVLLVAIVGYLCL) form a helical membrane-spanning segment. S326 carries the phosphoserine modification. C440 is a binding site for heme.

This sequence belongs to the cytochrome P450 family. The cofactor is heme.

The protein localises to the endoplasmic reticulum membrane. It is found in the microsome membrane. The catalysed reaction is 7alpha-hydroxycholest-4-en-3-one + reduced [NADPH--hemoprotein reductase] + O2 = 7alpha,12alpha-dihydroxycholest-4-en-3-one + oxidized [NADPH--hemoprotein reductase] + H2O + H(+). It catalyses the reaction 5beta-cholestane-3alpha,7alpha-diol + reduced [NADPH--hemoprotein reductase] + O2 = 5beta-cholestane-3alpha,7alpha,12alpha-triol + oxidized [NADPH--hemoprotein reductase] + H2O + H(+). The enzyme catalyses chenodeoxycholate + reduced [NADPH--hemoprotein reductase] + O2 = cholate + oxidized [NADPH--hemoprotein reductase] + H2O + H(+). Its pathway is lipid metabolism; bile acid biosynthesis. In terms of biological role, a cytochrome P450 monooxygenase involved in primary bile acid biosynthesis. Catalyzes the 12alpha-hydroxylation of 7alpha-hydroxy-4-cholesten-3-one, an intermediate metabolite in cholic acid biosynthesis. Controls biliary balance of cholic acid and chenodeoxycholic acid, ultimately regulating the intestinal absorption of dietary lipids. Mechanistically, uses molecular oxygen inserting one oxygen atom into a substrate, and reducing the second into a water molecule, with two electrons provided by NADPH via cytochrome P450 reductase (CPR; NADPH--hemoprotein reductase). This is 5-beta-cholestane-3-alpha,7-alpha-diol 12-alpha-hydroxylase (CYP8B1) from Sus scrofa (Pig).